The sequence spans 435 residues: Trigger factor (435 aa).

The 86-residue stretch at 161–246 (DDQVTLDFEG…LTKVEEQILP (86 aa)) folds into the PPIase FKBP-type domain.

Belongs to the FKBP-type PPIase family. Tig subfamily.

The protein localises to the cytoplasm. The catalysed reaction is [protein]-peptidylproline (omega=180) = [protein]-peptidylproline (omega=0). In terms of biological role, involved in protein export. Acts as a chaperone by maintaining the newly synthesized protein in an open conformation. Functions as a peptidyl-prolyl cis-trans isomerase. The sequence is that of Trigger factor from Psychromonas ingrahamii (strain DSM 17664 / CCUG 51855 / 37).